We begin with the raw amino-acid sequence, 259 residues long: Phosphatidylinositol transfer protein 2 (259 aa).

The stretch at 231 to 259 (LTIEDIRKIEEETKAELAKKLEENKAANK) forms a coiled coil.

This sequence belongs to the PtdIns transfer protein family. PI transfer class IIA subfamily.

It is found in the cytoplasm. The protein resides in the golgi apparatus. Its function is as follows. Catalyzes the transfer of PtdIns and phosphatidylcholine between membranes. The chain is Phosphatidylinositol transfer protein 2 (pitB) from Dictyostelium discoideum (Social amoeba).